We begin with the raw amino-acid sequence, 418 residues long: Cobalt-zinc-cadmium resistance protein CzcC (418 aa).

The signal sequence occupies residues 1 to 22; sequence MRRLFLPLGLAVAFLSPNFAVA.

This sequence belongs to the outer membrane factor (OMF) (TC 1.B.17) family.

It localises to the cell outer membrane. Its function is as follows. CzcC protein appears to modify the specificity of the system, perhaps by acting on the CzcB protein. When the CzcC protein is added to CzcA and CzcB, the efflux system gains specificity for cadmium and cobalt. This Cupriavidus metallidurans (strain ATCC 43123 / DSM 2839 / NBRC 102507 / CH34) (Ralstonia metallidurans) protein is Cobalt-zinc-cadmium resistance protein CzcC (czcC).